The sequence spans 182 residues: CDP-diacylglycerol--glycerol-3-phosphate 3-phosphatidyltransferase (182 aa).

Over 1–12 (MRLNIPTCLTLF) the chain is Cytoplasmic. The chain crosses the membrane as a helical span at residues 13–37 (RLIIVPFFIIVFYLPFSNASFYSAI). The Periplasmic portion of the chain corresponds to 38–60 (IFILAALTDWFDGFLARKLNQTT). A helical transmembrane segment spans residues 61–81 (CFGAFLDPVADKIIVVIGLIL). The Cytoplasmic portion of the chain corresponds to 82 to 86 (IIEYF). Residues 87 to 107 (HSFWITIPSLIMIIREIIISS) form a helical membrane-spanning segment. Over 108–145 (LREWMAEIGKNNLLSVSLISKLKTSIQMLAIFSLLWKE) the chain is Periplasmic. Residues 146–168 (TYIIIIIGILSLYVSSILAFLSM) form a helical membrane-spanning segment. The Cytoplasmic portion of the chain corresponds to 169 to 181 (LKYFYIAWRDLFR).

Belongs to the CDP-alcohol phosphatidyltransferase class-I family.

Its subcellular location is the cell inner membrane. The catalysed reaction is a CDP-1,2-diacyl-sn-glycerol + sn-glycerol 3-phosphate = a 1,2-diacyl-sn-glycero-3-phospho-(1'-sn-glycero-3'-phosphate) + CMP + H(+). It functions in the pathway phospholipid metabolism; phosphatidylglycerol biosynthesis; phosphatidylglycerol from CDP-diacylglycerol: step 1/2. Its function is as follows. Catalyzes the conversion of cytidine diphosphate diacylglycerol (CDP-DG) and glycerol 3-phosphate into phosphatidylglycerol. Essential for the synthesis of anionic phospholipids, thereby playing a role in balancing the ratio of zwitterionic and anionic phospholipids, which is thought to be important for normal membrane function. This Wigglesworthia glossinidia brevipalpis protein is CDP-diacylglycerol--glycerol-3-phosphate 3-phosphatidyltransferase.